Reading from the N-terminus, the 638-residue chain is Exocyst complex component EXO70A1 (638 aa).

The disordered stretch occupies residues phenylalanine 163–aspartate 190.

Belongs to the EXO70 family. The exocyst complex is composed of SEC3, SEC5, SEC6, SEC8, SEC10, EXO70A1 and EXO84B. Interacts with SEC3A and EXO84B. Co-localizes with FPP3/VETH1, FPP2/VETH2 and COG2 in vesicle-like small motile compartments. May interact with COG2.

Its subcellular location is the cytoplasm. It is found in the cytosol. The protein localises to the cytoskeleton. The protein resides in the phragmoplast. It localises to the cell membrane. Its subcellular location is the secreted. It is found in the cell wall. Component of the exocyst complex involved in the docking of exocytic vesicles with fusion sites on the plasma membrane during regulated or polarized secretion. Involved in polarized cell growth and organ morphogenesis. Involved in polarized cell growth and organ morphogenesis. During cytokinesis, involved in cell plate initiation, cell plate maturation and formation of new primary cell wall. Participates in polarized pectin delivery required for the polarized development of the mucilage-producing volcano cells of the seed coat. Involved in the recycling and localization of auxin efflux carriers PIN1 and PIN2, and thus in polar auxin transport regulation. Functions in vesicle trafficking in tracheary elements to regulate patterned secondary cell wall (SCW) thickening. The protein is Exocyst complex component EXO70A1 of Arabidopsis thaliana (Mouse-ear cress).